Consider the following 196-residue polypeptide: Phosphoheptose isomerase (196 aa).

The region spanning M36 to A196 is the SIS domain. Substrate is bound at residue N51–G53. The Zn(2+) site is built by H60 and E64. Residues E64, N93–D94, S119–S121, S124, and Q174 each bind substrate. The Zn(2+) site is built by Q174 and H182.

This sequence belongs to the SIS family. GmhA subfamily. In terms of assembly, homotetramer. It depends on Zn(2+) as a cofactor.

The protein resides in the cytoplasm. The enzyme catalyses 2 D-sedoheptulose 7-phosphate = D-glycero-alpha-D-manno-heptose 7-phosphate + D-glycero-beta-D-manno-heptose 7-phosphate. The protein operates within carbohydrate biosynthesis; D-glycero-D-manno-heptose 7-phosphate biosynthesis; D-glycero-alpha-D-manno-heptose 7-phosphate and D-glycero-beta-D-manno-heptose 7-phosphate from sedoheptulose 7-phosphate: step 1/1. In terms of biological role, catalyzes the isomerization of sedoheptulose 7-phosphate in D-glycero-D-manno-heptose 7-phosphate. This chain is Phosphoheptose isomerase, found in Alkalilimnicola ehrlichii (strain ATCC BAA-1101 / DSM 17681 / MLHE-1).